Reading from the N-terminus, the 470-residue chain is MEESMDAKLKYKAKKIKMVFFDIDDTLRVKDTGYMPESIQRVFKALKAKGILVGIASGRARYGVPQEVQDLHADYCVKLNGAYVKDDAKTIIFQAPIPADVVVAYKKWADDMGIFYGMAGRHEAVLSARNDMISNAIDNVYAQLEVCPDYNEYHDVYQMWTFEDKGDGLQLPAELAEHLRLVRWHDNSSDVVLKGTSKALGVSKVVDHLGLKPENILVFGDELNDLELFDYAGISIAMGVSHPLLQEKADFITKKVEEDGILYALEELGLIDKELQFPQLDLENHTGPKVTIKTNHGDMTLVLFPDHAPKTVANFLGLAKEGYYDGIIFHRIIPEFMIQGGDPTGTGMGGQSIYGESFEDEFSDELYNLRGALSMANAGPNTNGSQFFIVQNSKIPYAKKELERGGWPTPIAAAYAENGGTPHLDRRHTVFGQLVDETSFQVLDLIAGVETGAQDKPKEDVIIETIEVFD.

Asp22 (nucleophile) is an active-site residue. 3 residues coordinate Mg(2+): Asp22, Asp24, and Asp221. A PPIase cyclophilin-type domain is found at 286–468; sequence TGPKVTIKTN…EDVIIETIEV (183 aa).

This sequence in the C-terminal section; belongs to the cyclophilin-type PPIase family. PPIL1 subfamily. The cofactor is Mg(2+).

The catalysed reaction is [protein]-peptidylproline (omega=180) = [protein]-peptidylproline (omega=0). PPIases accelerate the folding of proteins. It catalyzes the cis-trans isomerization of proline imidic peptide bonds in oligopeptides. This chain is Putative bifunctional phosphatase/peptidyl-prolyl cis-trans isomerase, found in Streptococcus pyogenes serotype M6 (strain ATCC BAA-946 / MGAS10394).